Reading from the N-terminus, the 409-residue chain is 1-deoxy-D-xylulose 5-phosphate reductoisomerase (409 aa).

8 residues coordinate NADPH: Thr10, Gly11, Ser12, Ile13, Gly36, Arg37, Asn38, and Asn126. Lys127 is a binding site for 1-deoxy-D-xylulose 5-phosphate. NADPH is bound at residue Glu128. Asp152 contributes to the Mn(2+) binding site. Ser153, Glu154, Ser190, and His213 together coordinate 1-deoxy-D-xylulose 5-phosphate. Glu154 lines the Mn(2+) pocket. Gly219 contacts NADPH. Residues Ser226, Asn231, Lys232, and Glu235 each contribute to the 1-deoxy-D-xylulose 5-phosphate site. Residue Glu235 coordinates Mn(2+).

The protein belongs to the DXR family. Mg(2+) serves as cofactor. Requires Mn(2+) as cofactor.

The catalysed reaction is 2-C-methyl-D-erythritol 4-phosphate + NADP(+) = 1-deoxy-D-xylulose 5-phosphate + NADPH + H(+). It participates in isoprenoid biosynthesis; isopentenyl diphosphate biosynthesis via DXP pathway; isopentenyl diphosphate from 1-deoxy-D-xylulose 5-phosphate: step 1/6. Catalyzes the NADPH-dependent rearrangement and reduction of 1-deoxy-D-xylulose-5-phosphate (DXP) to 2-C-methyl-D-erythritol 4-phosphate (MEP). The polypeptide is 1-deoxy-D-xylulose 5-phosphate reductoisomerase (Prochlorococcus marinus (strain MIT 9515)).